The sequence spans 376 residues: Lipid-A-disaccharide synthase (376 aa).

Belongs to the LpxB family.

The enzyme catalyses a lipid X + a UDP-2-N,3-O-bis[(3R)-3-hydroxyacyl]-alpha-D-glucosamine = a lipid A disaccharide + UDP + H(+). It participates in bacterial outer membrane biogenesis; LPS lipid A biosynthesis. Its function is as follows. Condensation of UDP-2,3-diacylglucosamine and 2,3-diacylglucosamine-1-phosphate to form lipid A disaccharide, a precursor of lipid A, a phosphorylated glycolipid that anchors the lipopolysaccharide to the outer membrane of the cell. The polypeptide is Lipid-A-disaccharide synthase (Coxiella burnetii (strain Dugway 5J108-111)).